The primary structure comprises 188 residues: dCTP deaminase (188 aa).

109-114 serves as a coordination point for dCTP; sequence KSTYAR. Glutamate 135 acts as the Proton donor/acceptor in catalysis. Residues glutamine 154, tyrosine 168, and glutamine 178 each coordinate dCTP.

This sequence belongs to the dCTP deaminase family. As to quaternary structure, homotrimer.

It carries out the reaction dCTP + H2O + H(+) = dUTP + NH4(+). The protein operates within pyrimidine metabolism; dUMP biosynthesis; dUMP from dCTP (dUTP route): step 1/2. In terms of biological role, catalyzes the deamination of dCTP to dUTP. This Helicobacter pylori (strain G27) protein is dCTP deaminase.